The following is a 945-amino-acid chain: Probable inorganic carbon transporter subunit DabA (945 aa).

The Zn(2+) site is built by cysteine 408, aspartate 410, histidine 651, and cysteine 666.

Belongs to the inorganic carbon transporter (TC 9.A.2) DabA family. In terms of assembly, forms a complex with DabB. Zn(2+) is required as a cofactor.

The protein localises to the cell inner membrane. In terms of biological role, part of an energy-coupled inorganic carbon pump. This is Probable inorganic carbon transporter subunit DabA from Sulfurihydrogenibium azorense (strain DSM 15241 / OCM 825 / Az-Fu1).